Reading from the N-terminus, the 152-residue chain is Lipoprotein signal peptidase (152 aa).

Helical transmembrane passes span 55 to 75 (NGRWFFVAVAALAVAGILYYL) and 87 to 107 (VALGLVMGGAVGNMIDRIATG). Active-site residues include Asp-111 and Asp-129. A helical transmembrane segment spans residues 125–145 (FNVADICVTVGVGLLFLHLVL).

This sequence belongs to the peptidase A8 family.

The protein localises to the cell membrane. The catalysed reaction is Release of signal peptides from bacterial membrane prolipoproteins. Hydrolyzes -Xaa-Yaa-Zaa-|-(S,diacylglyceryl)Cys-, in which Xaa is hydrophobic (preferably Leu), and Yaa (Ala or Ser) and Zaa (Gly or Ala) have small, neutral side chains.. Its pathway is protein modification; lipoprotein biosynthesis (signal peptide cleavage). Functionally, this protein specifically catalyzes the removal of signal peptides from prolipoproteins. The polypeptide is Lipoprotein signal peptidase (Symbiobacterium thermophilum (strain DSM 24528 / JCM 14929 / IAM 14863 / T)).